Consider the following 150-residue polypeptide: Arginine repressor (150 aa).

This sequence belongs to the ArgR family.

It localises to the cytoplasm. It participates in amino-acid biosynthesis; L-arginine biosynthesis [regulation]. Its function is as follows. Regulates arginine biosynthesis genes. In Finegoldia magna (strain ATCC 29328 / DSM 20472 / WAL 2508) (Peptostreptococcus magnus), this protein is Arginine repressor.